A 315-amino-acid polypeptide reads, in one-letter code: Cytochrome c biogenesis protein CcsA (315 aa).

Helical transmembrane passes span 15–35 (SCFL…GFGG), 39–59 (FSFT…LQLI), 73–93 (LYES…YIEV), 97–117 (TLFL…FTDF), 144–164 (VMIA…AYLV), 222–242 (TIGI…IWAN), 257–277 (WAFI…VGGW), and 283–303 (ALVA…VNLL).

It belongs to the CcmF/CycK/Ccl1/NrfE/CcsA family. May interact with Ccs1.

Its subcellular location is the plastid. The protein localises to the chloroplast thylakoid membrane. Functionally, required during biogenesis of c-type cytochromes (cytochrome c6 and cytochrome f) at the step of heme attachment. The protein is Cytochrome c biogenesis protein CcsA of Chlorella vulgaris (Green alga).